We begin with the raw amino-acid sequence, 871 residues long: Transient receptor potential cation channel subfamily V member 4 (871 aa).

2 disordered regions span residues 1 to 68 (MADP…PNLR) and 110 to 143 (YGTY…PQPP). Residues 1 to 469 (MADPGDGPRA…RDKWRKFGAV (469 aa)) lie on the Cytoplasmic side of the membrane. Residue Y110 is modified to Phosphotyrosine. Over residues 116–129 (HPSDNKRWRRKVVE) the composition is skewed to basic and acidic residues. ATP contacts are provided by residues K192, K197, N201, 236 to 239 (YRGQ), and R248. 2 ANK repeats span residues 237–266 (RGQT…DVHA) and 284–313 (FGEL…KKAD). 249–251 (RCK) contacts a 1,2-diacyl-sn-glycero-3-phospho-(1D-myo-inositol-4,5-bisphosphate). Residue Y253 is modified to Phosphotyrosine. Residues 296-299 (NQPH) and K344 contribute to the a 1,2-diacyl-sn-glycero-3-phospho-(1D-myo-inositol-4,5-bisphosphate) site. One copy of the ANK 3 repeat lies at 369-398 (DGLSPLMMAAKTGKIGVFQHIIRREVTDED). The helical transmembrane segment at 470 to 490 (SFYINVVSYLCAMVIFTLTAY) threads the bilayer. At 491–507 (YQPLEGTPPYPYRTTVD) the chain is on the extracellular side. Residues 508–534 (YLRLAGEVITLLTGVLFFFTSIKDLFM) traverse the membrane as a helical segment. The Cytoplasmic portion of the chain corresponds to 535–547 (KKCPGVNSLFVDG). The helical transmembrane segment at 548–568 (SFQLLYFIYSVLVVVSAALYL) threads the bilayer. Residues 569 to 572 (AGIE) lie on the Extracellular side of the membrane. The chain crosses the membrane as a helical span at residues 573–593 (AYLAVMVFALVLGWMNALYFT). Over 594 to 608 (RGLKLTGTYSIMIQK) the chain is Cytoplasmic. Residues 609-636 (ILFKDLFRFLLVYLLFMIGYASALVTLL) traverse the membrane as a helical segment. Topologically, residues 637-665 (NPCTNMKVCNEDQSNCTVPSYPACRDSET) are extracellular. The pore-forming intramembrane region spans 666–685 (FSAFLLDLFKLTIGMGDLEM). A Selectivity filter motif is present at residues 679-682 (GMGD). D682 serves as a coordination point for Ca(2+). The Extracellular segment spans residues 686-693 (LSSAKYPV). The helical transmembrane segment at 694–722 (VFILLLVTYIILTFVLLLNMLIALMGETV) threads the bilayer. Residues 723 to 871 (GQVSKESKHI…PKWRAEDAPL (149 aa)) are Cytoplasmic-facing. Residue Y805 is modified to Phosphotyrosine. The interval 812–831 (HTMGRLRRDRWSSVVPRVVE) is interaction with calmodulin and ITPR3. The residue at position 824 (S824) is a Phosphoserine.

It belongs to the transient receptor (TC 1.A.4) family. TrpV subfamily. TRPV4 sub-subfamily. Homotetramer. Interacts with calmodulin. Interacts with MAP7 and Src family Tyr protein kinases LYN, SRC, FYN, HCK, LCK and YES. Interacts with CTNNB1. The TRPV4 and CTNNB1 complex can interact with CDH1. Part of a complex containing MLC1, AQP4, HEPACAM and ATP1B1. Interacts with PACSIN1, PACSIN2 and PACSIN3 (via SH3 domain). Interacts with ITPR3. Interacts with AQP5; the interaction is probably indirect and regulates TRPV4 activation by hypotonicity. Interacts with ANO1. Interacts (via C-terminus) with PKD2 (via C-terminus). Interacts with DDX3X; this interaction is decreased when the channel is activated. N-glycosylated. In terms of tissue distribution, expressed lung, spleen, kidney, testis, fat, and at very low levels in trigeminal ganglia.

It is found in the cell membrane. The protein resides in the apical cell membrane. It localises to the cell junction. The protein localises to the adherens junction. Its subcellular location is the cell projection. It is found in the cilium. The enzyme catalyses Ca(2+)(in) = Ca(2+)(out). Non-selective calcium permeant cation channel involved in osmotic sensitivity and mechanosensitivity. Activation by exposure to hypotonicity within the physiological range exhibits an outward rectification. Also activated by heat, low pH, citrate and phorbol esters. Increase of intracellular Ca(2+) potentiates currents. Channel activity seems to be regulated by a calmodulin-dependent mechanism with a negative feedback mechanism. Acts as a regulator of intracellular Ca(2+) in synoviocytes. Plays an obligatory role as a molecular component in the nonselective cation channel activation induced by 4-alpha-phorbol 12,13-didecanoate and hypotonic stimulation in synoviocytes and also regulates production of IL-8. Together with PKD2, forms mechano- and thermosensitive channels in cilium. Promotes cell-cell junction formation in skin keratinocytes and plays an important role in the formation and/or maintenance of functional intercellular barriers. Negatively regulates expression of PPARGC1A, UCP1, oxidative metabolism and respiration in adipocytes. Regulates expression of chemokines and cytokines related to pro-inflammatory pathway in adipocytes. Together with AQP5, controls regulatory volume decrease in salivary epithelial cells. Required for normal development and maintenance of bone and cartilage. In its inactive state, may sequester DDX3X at the plasma membrane. When activated, the interaction between both proteins is affected and DDX3X relocalizes to the nucleus. In neurons of the central nervous system, could play a role in triggering voluntary water intake in response to increased sodium concentration in body fluid. The sequence is that of Transient receptor potential cation channel subfamily V member 4 (Trpv4) from Rattus norvegicus (Rat).